Reading from the N-terminus, the 403-residue chain is MKPGAPPIATPLLDTLQRGLAELDAQGLRRVRRTADTACDAHMRVDGRDIVGFASNDYLGLAAHPALVAAFAEGAQRYGSGSGGSHLLGGHSRAHARLEDELAGFAGGFSDAPRALYFSTGYMANLAAMTALTGKQATIFSDALNHASLIDGIRLSRANVQIYPHADMHALGALLDASDAPTKLIVSDTVFSMDGDLAPLAELVALAERHGAWLVVDDAHGFGVLGPQGRGALAAAALRSPNLVYVGTLGKAAGVAGAFVVAHETAIEWMIQRARSYIFTTAAPPAVAHAVSASLKVIGGDEGDARRAHLAALIERTRALLRATRWQPVDSHTAVQPLVIGSNDATLAAMRALDARGLWVPAIRPPTVPAGTSRLRISLSAAHSFDDLARLEAALIAASEASA.

Arginine 30 is a binding site for substrate. Position 121–122 (121–122 (GY)) interacts with pyridoxal 5'-phosphate. Histidine 146 contributes to the substrate binding site. The pyridoxal 5'-phosphate site is built by serine 192, histidine 220, and threonine 248. Lysine 251 is subject to N6-(pyridoxal phosphate)lysine. Threonine 367 contacts substrate.

Belongs to the class-II pyridoxal-phosphate-dependent aminotransferase family. BioF subfamily. In terms of assembly, homodimer. Pyridoxal 5'-phosphate is required as a cofactor.

The catalysed reaction is 6-carboxyhexanoyl-[ACP] + L-alanine + H(+) = (8S)-8-amino-7-oxononanoate + holo-[ACP] + CO2. It participates in cofactor biosynthesis; biotin biosynthesis. Catalyzes the decarboxylative condensation of pimeloyl-[acyl-carrier protein] and L-alanine to produce 8-amino-7-oxononanoate (AON), [acyl-carrier protein], and carbon dioxide. The polypeptide is 8-amino-7-oxononanoate synthase (Burkholderia vietnamiensis (strain G4 / LMG 22486) (Burkholderia cepacia (strain R1808))).